We begin with the raw amino-acid sequence, 227 residues long: Albumin-2 (227 aa).

Hemopexin repeat units lie at residues 3–46, 61–111, 117–165, and 171–221; these read PGYI…GPTP, SYGI…FPFF, ESGI…YPCF, and ESGA…WPSL. Residues asparagine 7 and aspartate 65 each contribute to the Ca(2+) site. Residue serine 118 coordinates spermine. Residues aspartate 121 and aspartate 175 each contribute to the Ca(2+) site.

As to quaternary structure, monomer and homodimer. Dimers are prevalent in solution.

The protein resides in the cytoplasm. It is found in the cytosol. May play a role in response to oxidative stress and polyamine biosynthesis. The monomeric form binds one hemin per monomer. In the dimeric form, about half of the dimers bind one molecule of spermine each under physiological conditions. Ligand binding is mutually exclusive as binding of hemin leads to dissociation of the dimer. The chain is Albumin-2 from Lathyrus sativus (White vetchling).